A 464-amino-acid chain; its full sequence is D-inositol 3-phosphate glycosyltransferase (464 aa).

The segment covering 1–20 (MEGAPRRPDRHARSEEERHV) has biased composition (basic and acidic residues). The tract at residues 1 to 44 (MEGAPRRPDRHARSEEERHVSQYASRLGRRSPAAPTRRRMLRKP) is disordered. Position 53 (His-53) interacts with 1D-myo-inositol 3-phosphate. Residues 59–60 (QP) and Gly-67 each bind UDP-N-acetyl-alpha-D-glucosamine. Residues 64 to 69 (DAGGMN), Lys-122, Tyr-155, Thr-179, and Arg-199 each bind 1D-myo-inositol 3-phosphate. The UDP-N-acetyl-alpha-D-glucosamine site is built by Arg-274, Lys-279, and Val-340. Mg(2+) contacts are provided by Phe-349, Arg-350, and Ala-352. Residues Glu-362 and Glu-370 each coordinate UDP-N-acetyl-alpha-D-glucosamine. Position 376 (Thr-376) interacts with Mg(2+).

Belongs to the glycosyltransferase group 1 family. MshA subfamily. In terms of assembly, homodimer.

It carries out the reaction 1D-myo-inositol 3-phosphate + UDP-N-acetyl-alpha-D-glucosamine = 1D-myo-inositol 2-acetamido-2-deoxy-alpha-D-glucopyranoside 3-phosphate + UDP + H(+). Functionally, catalyzes the transfer of a N-acetyl-glucosamine moiety to 1D-myo-inositol 3-phosphate to produce 1D-myo-inositol 2-acetamido-2-deoxy-glucopyranoside 3-phosphate in the mycothiol biosynthesis pathway. The polypeptide is D-inositol 3-phosphate glycosyltransferase (Streptomyces avermitilis (strain ATCC 31267 / DSM 46492 / JCM 5070 / NBRC 14893 / NCIMB 12804 / NRRL 8165 / MA-4680)).